The sequence spans 862 residues: Probable glutaminase ARB_05535/05536 (862 aa).

The signal sequence occupies residues 1–19 (MLSWVLLAWAVACSALAGA). N-linked (GlcNAc...) asparagine glycosylation is found at N106, N273, N436, N448, N486, N610, and N744. Residues 798–862 (FLDDKDNNSP…SQMTIVNEND (65 aa)) form a disordered region. Positions 853 to 862 (SQMTIVNEND) are enriched in polar residues.

This sequence belongs to the fungal glutaminase gtaA family.

The protein resides in the secreted. It carries out the reaction L-glutamine + H2O = L-glutamate + NH4(+). Its function is as follows. Glutaminase catalyzes the hydrolysis of glutamine to glutamic acid and plays a key role in nitrogen metabolism. In Arthroderma benhamiae (strain ATCC MYA-4681 / CBS 112371) (Trichophyton mentagrophytes), this protein is Probable glutaminase ARB_05535/05536.